The sequence spans 344 residues: Arginine N-succinyltransferase (344 aa).

Succinyl-CoA is bound at residue Leu-125. The active-site Proton donor is the His-229.

It belongs to the arginine N-succinyltransferase family.

The catalysed reaction is succinyl-CoA + L-arginine = N(2)-succinyl-L-arginine + CoA + H(+). It participates in amino-acid degradation; L-arginine degradation via AST pathway; L-glutamate and succinate from L-arginine: step 1/5. Its function is as follows. Catalyzes the transfer of succinyl-CoA to arginine to produce N(2)-succinylarginine. The chain is Arginine N-succinyltransferase from Escherichia coli (strain 55989 / EAEC).